A 63-amino-acid polypeptide reads, in one-letter code: MARCRRHIRSRSRSRNQCQRRRRRSHYNRRRTYRRSRRHSRRRRVRRRGCSCRRCSRRRRRRC.

Residues Met1–Arg47 form a disordered region.

Belongs to the protamine P1 family. As to expression, testis.

It is found in the nucleus. It localises to the chromosome. Its function is as follows. Protamines substitute for histones in the chromatin of sperm during the haploid phase of spermatogenesis. They compact sperm DNA into a highly condensed, stable and inactive complex. In Planigale tenuirostris (Narrow-nosed planigale), this protein is Sperm protamine P1 (PRM1).